The chain runs to 94 residues: Co-chaperonin GroES (94 aa).

This sequence belongs to the GroES chaperonin family. Heptamer of 7 subunits arranged in a ring. Interacts with the chaperonin GroEL.

The protein localises to the cytoplasm. Its function is as follows. Together with the chaperonin GroEL, plays an essential role in assisting protein folding. The GroEL-GroES system forms a nano-cage that allows encapsulation of the non-native substrate proteins and provides a physical environment optimized to promote and accelerate protein folding. GroES binds to the apical surface of the GroEL ring, thereby capping the opening of the GroEL channel. The polypeptide is Co-chaperonin GroES (Clostridium beijerinckii (strain ATCC 51743 / NCIMB 8052) (Clostridium acetobutylicum)).